The following is a 314-amino-acid chain: Malate dehydrogenase (314 aa).

NAD(+)-binding positions include 11-16 and D35; that span reads GSGNIG. Substrate-binding residues include R84 and R90. Residues N97 and 120-122 each bind NAD(+); that span reads ITN. Residues N122 and R153 each coordinate substrate. Catalysis depends on H177, which acts as the Proton acceptor.

Belongs to the LDH/MDH superfamily. MDH type 3 family.

It carries out the reaction (S)-malate + NAD(+) = oxaloacetate + NADH + H(+). Its function is as follows. Catalyzes the reversible oxidation of malate to oxaloacetate. The sequence is that of Malate dehydrogenase from Rickettsia bellii (strain OSU 85-389).